The sequence spans 479 residues: Protein ORD (479 aa).

The interval 102–140 (KEEETEPESESDLDEGPSTSKQALERMVQRAERKAKEAS) is disordered. Residues 104 to 116 (EETEPESESDLDE) show a composition bias toward acidic residues. Residues 124–140 (ALERMVQRAERKAKEAS) show a composition bias toward basic and acidic residues.

As to quaternary structure, interacts with Sce.

It localises to the nucleus. It is found in the chromosome. The protein resides in the centromere. In terms of biological role, essential for proper maintenance of sister-chromatid cohesion in both male and female meiosis. Mutations in ord cause premature separation of the sister chromatids in meiosis I and random segregation in both meiotic divisions. Required for chiasma maintenance in female meiosis. Mutations in ord reduce recombination in female meiosis. The sequence is that of Protein ORD (ord) from Drosophila melanogaster (Fruit fly).